The following is a 58-amino-acid chain: Large ribosomal subunit protein bL32 (58 aa).

It belongs to the bacterial ribosomal protein bL32 family.

This Ligilactobacillus salivarius (strain UCC118) (Lactobacillus salivarius) protein is Large ribosomal subunit protein bL32.